A 290-amino-acid chain; its full sequence is Shikimate dehydrogenase (NADP(+)) (290 aa).

Shikimate is bound by residues 19 to 21 (SLS) and Ser-65. The active-site Proton acceptor is Lys-69. Residues Asn-90 and Asp-105 each coordinate shikimate. Residues 129–133 (GAGGA) and Leu-231 contribute to the NADP(+) site. Tyr-233 is a shikimate binding site. An NADP(+)-binding site is contributed by Gly-254.

Belongs to the shikimate dehydrogenase family. As to quaternary structure, homodimer.

It catalyses the reaction shikimate + NADP(+) = 3-dehydroshikimate + NADPH + H(+). The protein operates within metabolic intermediate biosynthesis; chorismate biosynthesis; chorismate from D-erythrose 4-phosphate and phosphoenolpyruvate: step 4/7. In terms of biological role, involved in the biosynthesis of the chorismate, which leads to the biosynthesis of aromatic amino acids. Catalyzes the reversible NADPH linked reduction of 3-dehydroshikimate (DHSA) to yield shikimate (SA). The protein is Shikimate dehydrogenase (NADP(+)) of Latilactobacillus sakei subsp. sakei (strain 23K) (Lactobacillus sakei subsp. sakei).